The sequence spans 3165 residues: MTDKSIIILSLMVFHSSFINGKTCRRELVEEWHPQPSSHVVNWTLTENICLDYYRDCWFLGVNTKIDTSGNQVVPQICPLQIQLGDILVISSEPSLQFPEINLMNVSETSFIGCVQNTTTEDQLLFGCRLKGMHTVNSKWLSVGTHYFITVMASGPSPCPLGLRLNVTVKQQFCQESLSSEFCSGHGKCLSEAWSKTYSCHCQPPFSGKYCQELDACSFKPCKNDGSCINKRGNWDEQGYECVCHPPFTGKNCSEIIVQCQPHVCFHGNCSNITSNSFICECDEQFSGPFCEVSTKPCVSLLCWKRGICPNSSSAYTYECPKGPSSQNGETDVSECSLILCENGTDGIKISNDVMCICSPIFTDLLCKSFQTSCESFPLKNNATFKKCEKDYHCSCMSGFTGKNCEKVIDHCKLLSINCLNEEWCFNIIGRFKYVCIPGCTKNPFWFLKNVHLIHLHPCYYGITFHGICQDKGPAHFEYVWQLGFTGSEGEKCQGVIDAYFFLTANCTEDAIYVNNPEDNNSSCSFPCEGTKEICANGCSCLSEEDNQEYRYLCFLRWTSNMYLENITDDQENKSQHEAICEDEINRPRCSCSLSYIGRLCVVNVDYCLGNQSISVHGLCLALSHNCNCSDLQKYEGNICEIDIEDCKSVSCKNGTTSIHLRGYFFYKCVPGFKGTRCEIDLDECALHPCKSGATCIDQPGNYFCQCGPPFKVVDGFSCLCNPGYVGTRCEQNIDNCILNAFEHNSTYKDLHLSYQCVCLSGWEGNFCEQESNECKMNPCKNNSTCTDLYKSYRCECTSGWTGQNCSEEINECDSDPCMNGGLCHESTIPGQFVCLCPPLYTGQFCHQRYNPCDLLNNPCRNNSTCLALVDGNQHCICREEFEGKHCEIDVKECLFLSCQDYGDCEDMVNNFRCICRPGFSGSLCEIEINECSSEPCKNNGTCVDLTNRFFCNCEPGYHGPFCELEVNKCKISPCLDEENCVYRTDRYNCLCAPGYTGINCEINLDECLSEPCLHDGVCIDGINHYTCDCKSGFFGTHCETNANDCLSNPCLHGRCTEPINEYPCSCDADGTSIQCKIKINDCTSMPCMNEGFCQKSAHGFTCICPRGYTGAYCEKSIDNCAEPELNSVICLNGGICVDGPGHTFDCRCLPGFSGQFCEININECSSSPCLHGANCEDHINGYVCKCQPGWSGHHCEKELECVPNSCVHQLCMENEPGSTCLCTPGFMTCSIGLLCGDEIRRITCLTPSFQRTDPISTQTHTVPPSETLVSSFPSIKATRIPTIMDTYPVDQGPKQTGIVKHDILPTTGLATLRISTPLKSYLLEELIVTRELSAKHSLLSSTDVSSSPFLNFGIHDPAQIVQDKTSVSHMRIRTSAATLGFFFPDRRARTSFIRSSLMSDFIFPTQSLLFENYQTVASSATPTTSVIRSIPGADIELNRHSLLSRGFLLTAASISATPVVSRGAQEDIKEYSAVSLISRREHWRSLISSMSPIFPAKKIISKQVTILNSSALHRFGTKAFIPSEYQAITEASSNQRLTNIKSQAADSLRELSQTCATCSMTEIKSSHEFSDQVLHSKQSHFYETFWMNSAILASWYALMGAQTITSGHSFSSATEITPSVAFTEVPSLFPSKKSAKRTILSSSLEESITLSSNLDVNLCLHKTCLSIVPSQTISSDLMNSDLTSELTTDELSVSENILKLLKIRQYGITTGPTEVLNQDSLLDMEKSKGSHTPFKLHPSDSSLDLELNLRSYPDVTLKTYSEITLANDLKNNLPPLTGSVPDFSEVTTNVAFYTVSATPALPIQTSSSMSVITPDWPYFIDYMTSLNKEVKTYSEWSKWELQPSVQYQEFPTASWHLPFTRSLTLSSLESIVAPQQLMISDFSCVCYYGDSYLEFQNVVLNPQNNISLEFQTFSSYGLLLYVKQDSNLVDGFFIQLSIENGTLKYHFYCPGEAKFKSINTAIRVDDGQKYTLLIRQELDPCKAELTILGRNTQTCESINHVLGKPLPKSGSVFIGGFPDLRGKIQMPVPVKNFTGCIEVIEINNWRSFIPSKAVRNYHINNCRSQGLMLSPTASFVDASDVTQGVDAMWTSVSPSVAAPSVCQEDVCHNGGTCRPIFLSSGIVSFQCDCPLHFTGRFCEKDAGLFFPSFSGNSYLELPFLNFVLEKEHNRTVTIYLTIKTNSLNGTILYSNGNNFGKQFLHLFLVEGKPSVKYGCGNSQNILTVSANYSINTNAFTPITVRHTMPIGSPGVVCMIEMTADGKPPVQKKDTEISHASQVYFESMFLGHIPENVQIHKKAGSVYGFRGCILDLQINNKEFFIIDEARRGKNIENCHVPWCAHHLCRNNGTCLSDSENLFCECPRLYSGKLCQFASCENNPCGNGATCVPKSGTDIICLCPYGRSGPLCTDAINITQPRFSGTDAFGYTSFLAYSRISDISFHYEFHLKFQLANNHSALQNNLIFFTGQKGHGLNGDDFLAVGLLNGSVVYSYNLGSGIASIRSDPLNLSLGVHTVHLGKFFQEGWLKVDDHKNKSIIAPGRLVGLNVFSQFYVGGYSEYTPDLLPNGADFKNGFQGCIFTLQVRTEKDGHFRGLGNPEGHPNAGRSVGQCHASPCSLMKCGNGGTCIESGTSVYCNCTTRWKGAFCTETVSICDPEHDPPHHCSRGATCISLPHGYTCFCPLGTTGIYCEQALILTVILEKPKPAEWKVKKEALSISDPSFRSSELSWMSFASFHVRKKTHIQLQFQPLAADGILFYAAQHLKAQSGDFLCISLVNGSVQLRYNLGDRTIILETLQKVTINGSTWHIIKAGRVGAEGYLDLDGINVTEKASTKMSSLDTNTDFYIGGVSSLNLVNPMAIENEPVGFHGCIRQVIINYQELQLTEFGAKGGSNVGDCDGTACGYNTCRNGGECRVNGTTFSCRCLPDWAGNICNQSAYCLNNLCLHQSLCIPDQSFSYSCLCTLGWVGRYCENKTSFTTAKFMGNSYIKYIDPNYRMRNLQFTTISLNFSTTKTEGLIIWMGIAQNEENDFLAIGLHNQTLKIAVNLGERISVPMSYNNGTFCCNKWHHVIVIQNQTLIKAYVNNSLILSEDIDPHKNFVALNYEGICYLGGFEYGRKVNIVTQEIFKTNFVGKIKDVVFFQDPKKIELIKLEGYNVYDGDEQNEVT.

The N-terminal stretch at 1-21 is a signal peptide; that stretch reads MTDKSIIILSLMVFHSSFING. 4 N-linked (GlcNAc...) asparagine glycosylation sites follow: N42, N105, N117, and N166. EGF-like domains are found at residues 170–212, 213–254, and 256–292; these read KQQF…KYCQ, ELDA…KNCS, and IIVQCQPHVCFHGNCSNITSNSFICECDEQFSGPFCE. Cystine bridges form between C174–C189, C183–C200, C202–C211, C217–C228, C222–C242, C244–C253, C260–C270, C265–C280, and C282–C291. N252, N269, and N272 each carry an N-linked (GlcNAc...) asparagine glycan. 2 N-linked (GlcNAc...) asparagine glycosylation sites follow: N311 and N343. 2 consecutive EGF-like domains span residues 332 to 368 and 370 to 406; these read DVSECSLILCENGTDGIKISNDVMCICSPIFTDLLCK and FQTSCESFPLKNNATFKKCEKDYHCSCMSGFTGKNCE. Cystine bridges form between C341–C356 and C358–C367. N-linked (GlcNAc...) asparagine glycosylation is present at N382. C396 and C405 are disulfide-bonded. 5 N-linked (GlcNAc...) asparagine glycosylation sites follow: N506, N520, N521, N566, and N573. 3 consecutive EGF-like domains span residues 566–602, 604–641, and 643–679; these read NITDDQENKSQHEAICEDEINRPRCSCSLSYIGRLCV, NVDYCLGNQSISVHGLCLALSHNCNCSDLQKYEGNICE, and DIEDCKSVSCKNGTTSIHLRGYFFYKCVPGFKGTRCE. 2 disulfide bridges follow: C592-C601 and C608-C620. Residues N611 and N628 are each glycosylated (N-linked (GlcNAc...) asparagine). A disulfide bridge links C629 with C640. Residue N654 is glycosylated (N-linked (GlcNAc...) asparagine). 4 disulfides stabilise this stretch: C669/C678, C685/C696, C690/C705, and C707/C719. Positions 681–720 constitute an EGF-like 9; calcium-binding domain; that stretch reads DLDECALHPCKSGATCIDQPGNYFCQCGPPFKVVDGFSCL. The region spanning 733-769 is the EGF-like 10 domain; the sequence is NIDNCILNAFEHNSTYKDLHLSYQCVCLSGWEGNFCE. An N-linked (GlcNAc...) asparagine glycan is attached at N745. Disulfide bonds link C759–C768, C775–C786, C780–C795, C797–C806, C813–C824, C818–C835, C837–C846, C853–C866, C860–C876, C878–C887, C894–C905, C899–C914, C916–C925, C932–C943, C937–C952, C954–C963, C970–C981, C975–C990, C992–C1001, C1008–C1019, C1013–C1028, C1030–C1039, C1046–C1056, C1051–C1065, C1067–C1076, C1083–C1094, C1088–C1103, C1105–C1114, C1121–C1137, C1131–C1147, C1149–C1158, C1165–C1176, C1170–C1185, and C1187–C1196. Residues 771–807 enclose the EGF-like 11; calcium-binding domain; it reads ESNECKMNPCKNNSTCTDLYKSYRCECTSGWTGQNCS. Residues N782, N783, and N805 are each glycosylated (N-linked (GlcNAc...) asparagine). 3 EGF-like domains span residues 809 to 847, 849 to 888, and 890 to 926; these read EINECDSDPCMNGGLCHESTIPGQFVCLCPPLYTGQFCH, RYNPCDLLNNPCRNNSTCLALVDGNQHCICREEFEGKHCE, and DVKECLFLSCQDYGDCEDMVNNFRCICRPGFSGSLCE. N-linked (GlcNAc...) asparagine glycosylation is found at N862 and N863. One can recognise an EGF-like 15; calcium-binding domain in the interval 928 to 964; sequence EINECSSEPCKNNGTCVDLTNRFFCNCEPGYHGPFCE. Residue N940 is glycosylated (N-linked (GlcNAc...) asparagine). One can recognise an EGF-like 16 domain in the interval 966–1002; the sequence is EVNKCKISPCLDEENCVYRTDRYNCLCAPGYTGINCE. Positions 1004-1040 constitute an EGF-like 17; calcium-binding domain; sequence NLDECLSEPCLHDGVCIDGINHYTCDCKSGFFGTHCE. EGF-like domains are found at residues 1042–1077, 1079–1115, and 1117–1159; these read NANDCLSNPCLHGRCTEPINEYPCSCDADGTSIQCK, KINDCTSMPCMNEGFCQKSAHGFTCICPRGYTGAYCE, and SIDN…QFCE. Residues 1161-1197 form the EGF-like 21; calcium-binding domain; that stretch reads NINECSSSPCLHGANCEDHINGYVCKCQPGWSGHHCE. N-linked (GlcNAc...) asparagine glycans are attached at residues N1509, N1906, N1941, and N2033. The Laminin G-like 1 domain occupies 1883 to 2063; that stretch reads FSCVCYYGDS…AVRNYHINNC (181 aa). Disulfide bonds link C2037-C2063, C2103-C2114, C2108-C2128, and C2130-C2139. In terms of domain architecture, EGF-like 22 spans 2099–2140; the sequence is APSVCQEDVCHNGGTCRPIFLSSGIVSFQCDCPLHFTGRFCE. Residues 2145–2339 form the Laminin G-like 2 domain; it reads LFFPSFSGNS…NIENCHVPWC (195 aa). Residues N2170, N2185, and N2228 are each glycosylated (N-linked (GlcNAc...) asparagine). 6 disulfide bridges follow: C2308-C2339, C2339-C2350, C2344-C2359, C2375-C2386, C2380-C2396, and C2398-C2407. 2 EGF-like domains span residues 2335 to 2368 and 2371 to 2408; these read HVPWCAHHLCRNNGTCLSDSENLFCECPRLYSGK and QFASCENNPCGNGATCVPKSGTDIICLCPYGRSGPLCT. N2347 is a glycosylation site (N-linked (GlcNAc...) asparagine). Residues N2412, N2453, N2484, N2506, and N2532 are each glycosylated (N-linked (GlcNAc...) asparagine). The Laminin G-like 3 domain occupies 2419-2609; that stretch reads SGTDAFGYTS…PNAGRSVGQC (191 aa). 3 disulfides stabilise this stretch: C2576–C2609, C2614–C2625, and C2619–C2634. EGF-like domains are found at residues 2610-2646 and 2648-2689; these read HASPCSLMKCGNGGTCIESGTSVYCNCTTRWKGAFCT and TVSI…IYCE. N2635 carries an N-linked (GlcNAc...) asparagine glycan. Intrachain disulfides connect C2636-C2645, C2652-C2668, C2662-C2677, and C2679-C2688. Residues 2717-2895 form the Laminin G-like 4 domain; sequence DPSFRSSELS…AKGGSNVGDC (179 aa). 3 N-linked (GlcNAc...) asparagine glycosylation sites follow: N2775, N2800, and N2824. Cystine bridges form between C2868–C2895, C2900–C2911, C2905–C2920, and C2922–C2931. EGF-like domains follow at residues 2896–2932 and 2933–2970; these read DGTACGYNTCRNGGECRVNGTTFSCRCLPDWAGNICN and QSAYCLNNLCLHQSLCIPDQSFSYSCLCTLGWVGRYCE. N-linked (GlcNAc...) asparagine glycosylation is present at N2914. N2932 carries N-linked (GlcNAc...) asparagine glycosylation. 3 disulfides stabilise this stretch: C2937-C2948, C2942-C2958, and C2960-C2969. Residues N2971, N3006, N3036, N3057, N3073, and N3082 are each glycosylated (N-linked (GlcNAc...) asparagine). In terms of domain architecture, Laminin G-like 5 spans 2975–3165; sequence FTTAKFMGNS…YDGDEQNEVT (191 aa).

This sequence belongs to the EYS family. Expressed in retina (at protein level).

It is found in the cell projection. The protein localises to the cilium. The protein resides in the photoreceptor outer segment. Its subcellular location is the cytoplasm. It localises to the cytoskeleton. It is found in the cilium axoneme. The protein localises to the microtubule organizing center. The protein resides in the centrosome. Its subcellular location is the secreted. It localises to the extracellular space. It is found in the extracellular matrix. The protein localises to the interphotoreceptor matrix. In terms of biological role, required to maintain the integrity of photoreceptor cells. Specifically required for normal morphology of the photoreceptor ciliary pocket, and might thus facilitate protein trafficking between the photoreceptor inner and outer segments via the transition zone. This is Protein eyes shut homolog from Macaca fascicularis (Crab-eating macaque).